The chain runs to 173 residues: Alpha-crystallin A chain (173 aa).

Position 1 is an N-acetylmethionine (Met-1). The region spanning 53-164 (NFLDSSNSGM…GDRSIPVTRD (112 aa)) is the sHSP domain. Residues His-101, Glu-103, and His-108 each coordinate Zn(2+). Cysteines 132 and 143 form a disulfide. The tract at residues 143–173 (CGPKSGGSESGRGDRSIPVTRDDKTNSTPSS) is disordered. Residues 153-167 (GRGDRSIPVTRDDKT) show a composition bias toward basic and acidic residues.

The protein belongs to the small heat shock protein (HSP20) family. Heteropolymer composed of three CRYAA and one CRYAB subunits. Inter-subunit bridging via zinc ions enhances stability, which is crucial as there is no protein turn over in the lens. Zinc coordination is achieved at least by His-101, Glu-103 and His-108. His-101 and Glu-103 come from the same molecule within the oligomer, while His-108 residue is provided by another molecule. Can also form homodimers and homotetramers (dimers of dimers) which serve as the building blocks of homooligomers. Part of a complex required for lens intermediate filament formation composed of BFSP1, BFSP2 and CRYAA.

It is found in the cytoplasm. The protein localises to the nucleus. Contributes to the transparency and refractive index of the lens. May act as a chaperone, preventing aggregation of various proteins under a wide range of stress conditions. The sequence is that of Alpha-crystallin A chain (cryaa) from Psalidodon fasciatus (Banded astyanax).